We begin with the raw amino-acid sequence, 509 residues long: ATP synthase subunit alpha (509 aa).

169-176 (GDRKTGKT) contacts ATP.

This sequence belongs to the ATPase alpha/beta chains family. As to quaternary structure, F-type ATPases have 2 components, CF(1) - the catalytic core - and CF(0) - the membrane proton channel. CF(1) has five subunits: alpha(3), beta(3), gamma(1), delta(1), epsilon(1). CF(0) has three main subunits: a(1), b(2) and c(9-12). The alpha and beta chains form an alternating ring which encloses part of the gamma chain. CF(1) is attached to CF(0) by a central stalk formed by the gamma and epsilon chains, while a peripheral stalk is formed by the delta and b chains.

It is found in the cell membrane. It catalyses the reaction ATP + H2O + 4 H(+)(in) = ADP + phosphate + 5 H(+)(out). Functionally, produces ATP from ADP in the presence of a proton gradient across the membrane. The alpha chain is a regulatory subunit. This chain is ATP synthase subunit alpha, found in Limosilactobacillus reuteri (strain DSM 20016) (Lactobacillus reuteri).